The following is a 395-amino-acid chain: Elongation factor Tu (395 aa).

The tr-type G domain occupies 10-204; sequence KPHVNIGTIG…EVDAYIPTPE (195 aa). The interval 19-26 is G1; the sequence is GHVDHGKT. 19–26 serves as a coordination point for GTP; it reads GHVDHGKT. Threonine 26 lines the Mg(2+) pocket. A G2 region spans residues 60 to 64; it reads GITIS. The segment at 81-84 is G3; the sequence is DCPG. GTP-binding positions include 81-85 and 136-139; these read DCPGH and NKCD. The G4 stretch occupies residues 136 to 139; it reads NKCD. A G5 region spans residues 174-176; it reads SAL.

Belongs to the TRAFAC class translation factor GTPase superfamily. Classic translation factor GTPase family. EF-Tu/EF-1A subfamily. In terms of assembly, monomer.

The protein localises to the cytoplasm. The enzyme catalyses GTP + H2O = GDP + phosphate + H(+). Functionally, GTP hydrolase that promotes the GTP-dependent binding of aminoacyl-tRNA to the A-site of ribosomes during protein biosynthesis. This chain is Elongation factor Tu, found in Bacillus cereus (strain G9842).